The primary structure comprises 453 residues: tRNA modification GTPase MnmE (453 aa).

(6S)-5-formyl-5,6,7,8-tetrahydrofolate contacts are provided by arginine 28, glutamate 90, and arginine 129. Positions 224-375 (GLRVAIIGRP…LSSALLKLCG (152 aa)) constitute a TrmE-type G domain. Residue asparagine 234 coordinates K(+). Residues 234 to 239 (NVGKSS), 253 to 259 (TDLPGTT), 278 to 281 (DTAG), and 356 to 358 (SAR) each bind GTP. Serine 238 is a Mg(2+) binding site. K(+) contacts are provided by threonine 253, leucine 255, and threonine 258. Threonine 259 is a Mg(2+) binding site. Lysine 453 provides a ligand contact to (6S)-5-formyl-5,6,7,8-tetrahydrofolate.

The protein belongs to the TRAFAC class TrmE-Era-EngA-EngB-Septin-like GTPase superfamily. TrmE GTPase family. As to quaternary structure, homodimer. Heterotetramer of two MnmE and two MnmG subunits. K(+) serves as cofactor.

The protein localises to the cytoplasm. Its function is as follows. Exhibits a very high intrinsic GTPase hydrolysis rate. Involved in the addition of a carboxymethylaminomethyl (cmnm) group at the wobble position (U34) of certain tRNAs, forming tRNA-cmnm(5)s(2)U34. This is tRNA modification GTPase MnmE from Synechococcus sp. (strain RCC307).